Here is a 234-residue protein sequence, read N- to C-terminus: Zinc finger FYVE domain-containing protein 21 (234 aa).

The FYVE-type zinc finger occupies 44-104 (DKECPRCMQC…QCADCALVSH (61 aa)). 8 residues coordinate Zn(2+): Cys-50, Cys-53, Cys-66, Cys-69, Cys-74, Cys-77, Cys-96, and Cys-99. Residues 107 to 234 (AEFYDKQLKV…TKLLYESRDQ (128 aa)) form a PH-like region.

Interacts with PTK2/FAK1.

The protein resides in the cell junction. The protein localises to the focal adhesion. Its subcellular location is the cytoplasmic vesicle. It localises to the endosome. Its function is as follows. Plays a role in cell adhesion, and thereby in cell motility which requires repeated formation and disassembly of focal adhesions. Regulates microtubule-induced PTK2/FAK1 dephosphorylation, an event important for focal adhesion disassembly, as well as integrin beta-1/ITGB1 cell surface expression. The sequence is that of Zinc finger FYVE domain-containing protein 21 (Zfyve21) from Rattus norvegicus (Rat).